We begin with the raw amino-acid sequence, 199 residues long: Putative rhomboid protease YdcA (199 aa).

6 helical membrane-spanning segments follow: residues 14 to 34 (LYPV…FFSL), 65 to 85 (ILLH…FLFA), 97 to 117 (FLLV…VTEP), 122 to 142 (HVGA…MVLF), 147 to 167 (IGQE…LMSF), and 172 to 192 (INMM…FLCV). Residue serine 126 is the Nucleophile of the active site. Residue histidine 177 is the Charge relay system of the active site.

It belongs to the peptidase S54 family.

It is found in the cell membrane. The chain is Putative rhomboid protease YdcA (ydcA) from Bacillus subtilis (strain 168).